Consider the following 677-residue polypeptide: Probable serine/threonine-protein kinase mkcF (677 aa).

The 58-residue stretch at 1–58 (MLYLVATGDYKGPSENHLSFTKGQRIEFLERTENGFIKGKLDGKVGIFPSSLITIETR) folds into the SH3 domain. The disordered stretch occupies residues 72 to 244 (TETKDDTGSI…SSSSSSTKRR (173 aa)). The segment covering 79-94 (GSISSSTSTSTSSLTT) has biased composition (low complexity). Positions 105–126 (GEQQPSTSTINGQSSSTSPILQ) are enriched in polar residues. The span at 127–146 (SNGTTNTTTSSTSNNNIGDN) shows a compositional bias: low complexity. The span at 158–174 (TTSNHSKSASRLSVASF) shows a compositional bias: polar residues. The segment covering 175 to 192 (STTTTATTTTTTTTTATS) has biased composition (low complexity). Positions 209-224 (DKKSKDDDKSEKEGLY) are enriched in basic and acidic residues. Positions 230 to 240 (SSSSSSSSSSS) are enriched in low complexity. Positions 401-646 (IKFTHMVGRG…VDKLMRHPFF (246 aa)) constitute a Protein kinase domain. ATP is bound by residues 407–415 (VGRGQYGKV) and Lys-428. The active-site Proton acceptor is Asp-519.

The protein belongs to the protein kinase superfamily. Ser/Thr protein kinase family. STE20 subfamily. Mg(2+) is required as a cofactor.

The catalysed reaction is L-seryl-[protein] + ATP = O-phospho-L-seryl-[protein] + ADP + H(+). It carries out the reaction L-threonyl-[protein] + ATP = O-phospho-L-threonyl-[protein] + ADP + H(+). The protein is Probable serine/threonine-protein kinase mkcF of Dictyostelium discoideum (Social amoeba).